We begin with the raw amino-acid sequence, 327 residues long: Serpentine receptor class alpha-12 (327 aa).

The Extracellular portion of the chain corresponds to 1–18 (MGCASEIQAEIFTSFGQL). Residues 19–39 (FYASFQTILFLATIIGSLLAI) form a helical membrane-spanning segment. At 40 to 53 (FELCKKTTVPDSTR) the chain is on the cytoplasmic side. The chain crosses the membrane as a helical span at residues 54–74 (VLLIGSLFFANAHEFAYFTAP). Topologically, residues 75–98 (LKVFQLNIFNTNTSCYPLISTRDC) are extracellular. A helical transmembrane segment spans residues 99 to 119 (IPTTTVLAMGISGNMLIQSAL). Over 120–138 (SIDRLLATIFPFSYSRMRA) the chain is Cytoplasmic. A helical membrane pass occupies residues 139-159 (LPGFVLLIMVLIPAMFTYSWI). Topologically, residues 160-185 (RLDIVLDDYQMFCSQWSANISTRANT) are extracellular. A helical membrane pass occupies residues 186-206 (FLEICSYLTVAHIIINCLIIL). Residues 207-234 (RNRAIEKRCRFDVTQRYLTSENLKTTQA) lie on the Cytoplasmic side of the membrane. The helical transmembrane segment at 235–255 (ICYLSIAQFLAMFMYSGGVLL) threads the bilayer. Residues 256 to 270 (MRKNRENIPTLIYFN) are Extracellular-facing. Residues 271–291 (VIVWVYAPPYACVSLAPLILF) traverse the membrane as a helical segment. The Cytoplasmic portion of the chain corresponds to 292 to 327 (SLWNLKKQRHIQIKSVQSAQKETQDDYIRKLQKSWK).

It belongs to the nematode receptor-like protein sra family. Expressed in neurons RIF/RIG and PVT.

The protein localises to the membrane. The polypeptide is Serpentine receptor class alpha-12 (sra-12) (Caenorhabditis elegans).